Reading from the N-terminus, the 1706-residue chain is DDT domain-containing protein PTM (1706 aa).

Positions 1–16 (MEAKVPRPRGRPRKRQ) are enriched in basic residues. Disordered stretches follow at residues 1-27 (MEAK…KLNN) and 144-168 (VTNS…RGSD). Positions 9 to 18 (RGRPRKRQRL) match the Nuclear localization signal motif. Positions 148 to 160 (EDGDSYSDSESSE) are enriched in acidic residues. One can recognise a DDT domain in the interval 192 to 252 (EEAVAHLLSV…LRALKGHLER (61 aa)). A compositionally biased stretch (basic and acidic residues) spans 375–393 (YKEKEVTDSSTNESKDLDS). Residues 375-408 (YKEKEVTDSSTNESKDLDSRCTNGGSNEVSSDLD) are disordered. The span at 394–408 (RCTNGGSNEVSSDLD) shows a compositional bias: polar residues. The PHD-type 1 zinc-finger motif lies at 411-458 (SDECRICGMDGTLLCCDGCPLAYHSRCIGVVKMYIPDGPWFCPECTIN). 2 disordered regions span residues 1165–1194 (KPPS…SVSK) and 1311–1345 (TNQK…PATP). Composition is skewed to polar residues over residues 1167–1194 (PSQQ…SVSK) and 1311–1323 (TNQK…SGLD). Over residues 1325–1336 (DSERMSEQKDSK) the composition is skewed to basic and acidic residues. 5 consecutive transmembrane segments (helical) span residues 1539 to 1559 (ALGS…SILP), 1569 to 1589 (LAGP…GLFL), 1596 to 1616 (ANDL…LGLI), 1624 to 1644 (AALH…WCGL), and 1682 to 1702 (MLGL…YVLI).

In terms of assembly, interacts (via the DDT domain) with CHR11 (via C-terminus).

The protein localises to the plastid. The protein resides in the chloroplast outer membrane. It localises to the nucleus. Membrane-bound transcription factor required for the plastid-to-nucleus retrograde signaling. Functions in multiple retrograde pathways. The plastid-to-nucleus signal plays an important role in the coordinated expression of both nuclear- and chloroplast-localized genes that encode photosynthesis-related proteins. In the nucleus, activates ABI4 transcription in a PHD-dependent manner associated with histone modifications. Localized primarily in the chloroplast outer membrane as dormant form and, in response to retrograde signals, is released from the membrane through proteolytic cleavage and its cleaved fragment containing the transcription factor domain is redistributed to the nucleus, where it regulates the expression of particular nuclear genes. The polypeptide is DDT domain-containing protein PTM (Arabidopsis thaliana (Mouse-ear cress)).